Reading from the N-terminus, the 284-residue chain is Diaminopimelate epimerase (284 aa).

Asparagine 20, glutamine 53, and asparagine 73 together coordinate substrate. Residue cysteine 82 is the Proton donor of the active site. Substrate-binding positions include 83 to 84 (GN), asparagine 167, asparagine 200, and 218 to 219 (ER). The active-site Proton acceptor is cysteine 227. 228–229 (GS) serves as a coordination point for substrate.

Belongs to the diaminopimelate epimerase family. As to quaternary structure, homodimer.

It is found in the cytoplasm. It carries out the reaction (2S,6S)-2,6-diaminopimelate = meso-2,6-diaminopimelate. Its pathway is amino-acid biosynthesis; L-lysine biosynthesis via DAP pathway; DL-2,6-diaminopimelate from LL-2,6-diaminopimelate: step 1/1. Catalyzes the stereoinversion of LL-2,6-diaminopimelate (L,L-DAP) to meso-diaminopimelate (meso-DAP), a precursor of L-lysine and an essential component of the bacterial peptidoglycan. The chain is Diaminopimelate epimerase from Xylella fastidiosa (strain M23).